We begin with the raw amino-acid sequence, 218 residues long: ATP phosphoribosyltransferase (218 aa).

The protein belongs to the ATP phosphoribosyltransferase family. Short subfamily. As to quaternary structure, heteromultimer composed of HisG and HisZ subunits.

Its subcellular location is the cytoplasm. It carries out the reaction 1-(5-phospho-beta-D-ribosyl)-ATP + diphosphate = 5-phospho-alpha-D-ribose 1-diphosphate + ATP. It participates in amino-acid biosynthesis; L-histidine biosynthesis; L-histidine from 5-phospho-alpha-D-ribose 1-diphosphate: step 1/9. In terms of biological role, catalyzes the condensation of ATP and 5-phosphoribose 1-diphosphate to form N'-(5'-phosphoribosyl)-ATP (PR-ATP). Has a crucial role in the pathway because the rate of histidine biosynthesis seems to be controlled primarily by regulation of HisG enzymatic activity. This is ATP phosphoribosyltransferase from Acaryochloris marina (strain MBIC 11017).